The chain runs to 272 residues: Proteasome subunit beta (272 aa).

A propeptide spans Met-1–Ala-47 (removed in mature form; by autocatalysis). Residue Thr-48 is the Nucleophile of the active site.

This sequence belongs to the peptidase T1B family. In terms of assembly, the 20S proteasome core is composed of 14 alpha and 14 beta subunits that assemble into four stacked heptameric rings, resulting in a barrel-shaped structure. The two inner rings, each composed of seven catalytic beta subunits, are sandwiched by two outer rings, each composed of seven alpha subunits. The catalytic chamber with the active sites is on the inside of the barrel. Has a gated structure, the ends of the cylinder being occluded by the N-termini of the alpha-subunits. Is capped by the proteasome-associated ATPase, ARC.

The protein localises to the cytoplasm. The catalysed reaction is Cleavage of peptide bonds with very broad specificity.. It functions in the pathway protein degradation; proteasomal Pup-dependent pathway. The formation of the proteasomal ATPase ARC-20S proteasome complex, likely via the docking of the C-termini of ARC into the intersubunit pockets in the alpha-rings, may trigger opening of the gate for substrate entry. Interconversion between the open-gate and close-gate conformations leads to a dynamic regulation of the 20S proteasome proteolysis activity. Its function is as follows. Component of the proteasome core, a large protease complex with broad specificity involved in protein degradation. The polypeptide is Proteasome subunit beta (Beutenbergia cavernae (strain ATCC BAA-8 / DSM 12333 / CCUG 43141 / JCM 11478 / NBRC 16432 / NCIMB 13614 / HKI 0122)).